The primary structure comprises 211 residues: ATP phosphoribosyltransferase (211 aa).

The protein belongs to the ATP phosphoribosyltransferase family. Short subfamily. As to quaternary structure, heteromultimer composed of HisG and HisZ subunits.

The protein resides in the cytoplasm. It carries out the reaction 1-(5-phospho-beta-D-ribosyl)-ATP + diphosphate = 5-phospho-alpha-D-ribose 1-diphosphate + ATP. Its pathway is amino-acid biosynthesis; L-histidine biosynthesis; L-histidine from 5-phospho-alpha-D-ribose 1-diphosphate: step 1/9. Functionally, catalyzes the condensation of ATP and 5-phosphoribose 1-diphosphate to form N'-(5'-phosphoribosyl)-ATP (PR-ATP). Has a crucial role in the pathway because the rate of histidine biosynthesis seems to be controlled primarily by regulation of HisG enzymatic activity. This chain is ATP phosphoribosyltransferase (hisG), found in Pseudomonas aeruginosa (strain ATCC 15692 / DSM 22644 / CIP 104116 / JCM 14847 / LMG 12228 / 1C / PRS 101 / PAO1).